We begin with the raw amino-acid sequence, 361 residues long: Chorismate synthase (361 aa).

NADP(+) is bound by residues R48 and R54. Residues 125 to 127, 238 to 239, G278, 293 to 297, and R319 contribute to the FMN site; these read RSS, NA, and KPTSS.

Belongs to the chorismate synthase family. Homotetramer. The cofactor is FMNH2.

The enzyme catalyses 5-O-(1-carboxyvinyl)-3-phosphoshikimate = chorismate + phosphate. Its pathway is metabolic intermediate biosynthesis; chorismate biosynthesis; chorismate from D-erythrose 4-phosphate and phosphoenolpyruvate: step 7/7. Functionally, catalyzes the anti-1,4-elimination of the C-3 phosphate and the C-6 proR hydrogen from 5-enolpyruvylshikimate-3-phosphate (EPSP) to yield chorismate, which is the branch point compound that serves as the starting substrate for the three terminal pathways of aromatic amino acid biosynthesis. This reaction introduces a second double bond into the aromatic ring system. This Pectobacterium atrosepticum (strain SCRI 1043 / ATCC BAA-672) (Erwinia carotovora subsp. atroseptica) protein is Chorismate synthase.